We begin with the raw amino-acid sequence, 419 residues long: NF-kappa-B essential modulator (419 aa).

Positions 1-46 (MSRTPWKSQPCEMVQPSGGPAGDQDVLGEESSLGKPTMLHLPSEQG) are disordered. The segment at 1–197 (MSRTPWKSQP…REALQQQHSV (197 aa)) is required for interaction with and ubiquitination by MARCHF2. S31, S43, S68, and S85 each carry phosphoserine. Positions 44 to 111 (EQGAPETFQR…RLVERLSLEK (68 aa)) are interaction with CHUK/IKBKB. Residues 100–353 (ARRLVERLSL…KTSCQESARI (254 aa)) are a coiled coil. Glycyl lysine isopeptide (Lys-Gly) (interchain with G-Cter in ubiquitin) cross-links involve residues K111, K139, K143, K226, K246, and K264. Residues 150 to 257 (LGELQESQSR…SVVSSERNRG (108 aa)) form an interaction with TANK region. Residues 242-350 (DNHIKSSVVS…SRLKTSCQES (109 aa)) form a ubiquitin-binding (UBAN) region. The tract at residues 246 to 365 (KSSVVSSERN…MRKRHVEVSQ (120 aa)) is self-association. Residues 251–419 (SSERNRGLQL…LQIHVMECIE (169 aa)) are required for interaction with TNFAIP3. Residue K277 forms a Glycyl lysine isopeptide (Lys-Gly) (interchain with G-Cter in SUMO); alternate linkage. A Glycyl lysine isopeptide (Lys-Gly) (interchain with G-Cter in ubiquitin); alternate cross-link involves residue K277. Residues K283, K285, K292, and K302 each participate in a glycyl lysine isopeptide (Lys-Gly) (interchain with G-Cter in ubiquitin) cross-link. A Glycyl lysine isopeptide (Lys-Gly) (interchain with G-Cter in SUMO); alternate cross-link involves residue K309. K309 participates in a covalent cross-link: Glycyl lysine isopeptide (Lys-Gly) (interchain with G-Cter in ubiquitin); alternate. Residues 322–343 (LAERKELLQEQLEQLQREYSRL) are leucine-zipper. A Glycyl lysine isopeptide (Lys-Gly) (interchain with G-Cter in ubiquitin) cross-link involves residue K326. Residues 363–394 (VSQPTLPPAPAHHSFHPALPSQRRSPPEEPPN) form a disordered region. Phosphoserine occurs at positions 376 and 387. Residues 382–419 (PSQRRSPPEEPPNFCCPKCQYQAPDMDTLQIHVMECIE) form an interaction with CYLD region. The CCHC NOA-type zinc finger occupies 389–419 (PEEPPNFCCPKCQYQAPDMDTLQIHVMECIE). C397 is a binding site for Zn(2+). Residue K399 forms a Glycyl lysine isopeptide (Lys-Gly) (interchain with G-Cter in ubiquitin) linkage. The Zn(2+) site is built by C400, H413, and C417.

In terms of assembly, homodimer; disulfide-linked. Component of the I-kappa-B-kinase (IKK) core complex consisting of CHUK, IKBKB and IKBKG; probably four alpha/CHUK-beta/IKBKB dimers are associated with four gamma/IKBKG subunits. The IKK core complex seems to associate with regulatory or adapter proteins to form a IKK-signalosome holo-complex. The IKK complex associates with TERF2IP/RAP1, leading to promote IKK-mediated phosphorylation of RELA/p65. Part of a complex composed of NCOA2, NCOA3, CHUK/IKKA, IKBKB, IKBKG and CREBBP. Interacts with COPS3, CYLD, NALP2, TRPC4AP and PIDD1. Interacts with ATM; the complex is exported from the nucleus. Interacts with TRAF6. Interacts with IKBKE. Interacts with TANK; the interaction is enhanced by IKBKE and TBK1. Part of a ternary complex consisting of TANK, IKBKB and IKBKG. Interacts with ZFAND5. Interacts with RIPK2. Interacts with TNIP1 and TNFAIP3; TNIP1 facilitates the TNFAIP3-mediated de-ubiquitination of IKBKG. Interacts with TNFAIP3; the interaction is induced by TNF stimulation and by polyubiquitin. Binds (via UBAN region) polyubiquitin; binds both 'Lys-63'-linked and linear polyubiquitin, with higher affinity for linear ubiquitin. Interacts with NLRP10. Interacts with TANK; this interaction increases in response to DNA damage. Interacts with USP10; this interaction increases in response to DNA damage. Interacts with ZC3H12A; this interaction increases in response to DNA damage. Interacts with IFIT5; the interaction synergizes the recruitment of IKK to MAP3K7 and enhances IKK phosphorylation. Interacts with TRIM29; this interaction induces IKBKG/NEMO ubiquitination and proteolytic degradation. Interacts with TRIM13; this interaction leads to IKBKG/NEMO ubiquitination. Interacts with ARFIP2. Interacts with RIPK1. Interacts with (ubiquitinated) BCL10; interaction with polyubiquitinated BCL10 via both 'Lys-63'-linked and linear ubiquitin is required for TCR-induced NF-kappa-B activation. Interacts with MARCHF2; during the late stages of macrophage viral and bacterial infection; the interaction leads to ubiquitination and degradation of IKBKG/NEMO. Phosphorylation at Ser-68 attenuates aminoterminal homodimerization. Post-translationally, polyubiquitinated on Lys-285 via 'Lys-63'-linked ubiquitin; the ubiquitination is mediated downstream of NOD2 and RIPK2 and probably plays a role in signaling by facilitating interactions with ubiquitin domain-containing proteins and activates the NF-kappa-B pathway. Polyubiquitinated on Lys-285 and Lys-399 through 'Lys-63'-linked ubiquitin; the ubiquitination is mediated by BCL10, MALT1 and TRAF6 and probably plays a role in signaling by facilitating interactions with ubiquitin domain-containing proteins and activates the NF-kappa-B pathway. Monoubiquitinated on Lys-277 and Lys-309; promotes nuclear export. Polyubiquitinated through 'Lys-27' by TRIM23; involved in antiviral innate and inflammatory responses. Linear polyubiquitinated on Lys-111, Lys-143, Lys-226, Lys-246, Lys-264, Lys-277, Lys-285, Lys-292, Lys-302, Lys-309 and Lys-326; the head-to-tail polyubiquitination is mediated by the LUBAC complex and plays a key role in NF-kappa-B activation. Deubiquitinated by USP10 in a TANK-dependent and -independent manner, leading to the negative regulation of NF-kappa-B signaling upon DNA damage. Ubiquitinated at Lys-326 by MARCHF2 following bacterial and viral infection which leads to its degradation. In terms of processing, sumoylated on Lys-277 and Lys-309 with SUMO1; the modification results in phosphorylation of Ser-85 by ATM leading to a replacement of the sumoylation by mono-ubiquitination on these residues. Neddylated by TRIM40, resulting in stabilization of NFKBIA and down-regulation of NF-kappa-B activity. Post-translationally, (Microbial infection) Cleaved by porcine reproductive and respiratory syndrome virus serine protease nsp4 after Glu-349. The cleavage inhibits NEMO proper function.

The protein localises to the cytoplasm. It localises to the nucleus. Its function is as follows. Regulatory subunit of the IKK core complex which phosphorylates inhibitors of NF-kappa-B thus leading to the dissociation of the inhibitor/NF-kappa-B complex and ultimately the degradation of the inhibitor. Its binding to scaffolding polyubiquitin plays a key role in IKK activation by multiple signaling receptor pathways. Can recognize and bind both 'Lys-63'-linked and linear polyubiquitin upon cell stimulation, with a much highr affinity for linear polyubiquitin. Could be implicated in NF-kappa-B-mediated protection from cytokine toxicity. Essential for viral activation of IRF3. Involved in TLR3- and IFIH1-mediated antiviral innate response; this function requires 'Lys-27'-linked polyubiquitination. This is NF-kappa-B essential modulator (IKBKG) from Sus scrofa (Pig).